The chain runs to 197 residues: Probable GTP-binding protein EngB (197 aa).

The 174-residue stretch at 22–195 (QLPELALAGR…WRTILNHLKV (174 aa)) folds into the EngB-type G domain. GTP is bound by residues 30–37 (GRSNVGKS), 57–61 (GKTQT), 75–78 (DVPG), 142–145 (TKAD), and 174–176 (FSS). Residues S37 and T59 each coordinate Mg(2+).

This sequence belongs to the TRAFAC class TrmE-Era-EngA-EngB-Septin-like GTPase superfamily. EngB GTPase family. Mg(2+) is required as a cofactor.

Its function is as follows. Necessary for normal cell division and for the maintenance of normal septation. This Shouchella clausii (strain KSM-K16) (Alkalihalobacillus clausii) protein is Probable GTP-binding protein EngB.